Here is a 273-residue protein sequence, read N- to C-terminus: NAD kinase (273 aa).

Residue Asp-53 is the Proton acceptor of the active site. Residues 53 to 54, Arg-58, 128 to 129, Asp-157, 168 to 173, and Ala-192 each bind NAD(+); these read DG, NE, and TAYNFS.

This sequence belongs to the NAD kinase family. A divalent metal cation is required as a cofactor.

Its subcellular location is the cytoplasm. The enzyme catalyses NAD(+) + ATP = ADP + NADP(+) + H(+). Functionally, involved in the regulation of the intracellular balance of NAD and NADP, and is a key enzyme in the biosynthesis of NADP. Catalyzes specifically the phosphorylation on 2'-hydroxyl of the adenosine moiety of NAD to yield NADP. This Finegoldia magna (strain ATCC 29328 / DSM 20472 / WAL 2508) (Peptostreptococcus magnus) protein is NAD kinase.